Here is a 419-residue protein sequence, read N- to C-terminus: Variant surface glycoprotein YnAT 1.1 (419 aa).

The first 28 residues, 1 to 28, serve as a signal peptide directing secretion; sequence MKRVLSNVLKAWIFTIVAFHNFSTSVTA. 2 N-linked (GlcNAc...) asparagine glycosylation sites follow: Asn-82 and Asn-358. Residues 369–405 are disordered; it reads ESSRPPSTDANTSQKGPLQRPEKSGESSHLPSGSSHG. A compositionally biased stretch (polar residues) spans 372 to 384; that stretch reads RPPSTDANTSQKG. The N-linked (GlcNAc...) (high mannose) asparagine glycan is linked to Asn-379. Positions 395–405 are enriched in low complexity; the sequence is SSHLPSGSSHG. Ser-400 carries GPI-anchor amidated serine lipidation. Residues 401-419 constitute a propeptide, removed in mature form; that stretch reads GSSHGTKAIRSILHVALLM.

The protein localises to the cell membrane. VSG forms a coat on the surface of the parasite. The trypanosome evades the immune response of the host by expressing a series of antigenically distinct VSGs from an estimated 1000 VSG genes. The polypeptide is Variant surface glycoprotein YnAT 1.1 (Trypanosoma congolense).